A 1228-amino-acid chain; its full sequence is Probable phospholipid-transporting ATPase 5 (1228 aa).

At 1 to 74 the chain is on the cytoplasmic side; it reads MARGRIRSKL…TTRYNLITFF (74 aa). Residues 75–96 form a helical membrane-spanning segment; the sequence is PKSLYEQFHRAANLYFLVAAIL. Over 97–100 the chain is Extracellular; that stretch reads SVFP. A helical membrane pass occupies residues 101 to 123; that stretch reads LSPFNKWSMIAPLVFVVGLSMLK. Residues 124-305 lie on the Cytoplasmic side of the membrane; that stretch reads EALEDWRRFM…SRIERTMDYI (182 aa). A helical transmembrane segment spans residues 306 to 327; sequence IYTLLVLLILISCISSSGFAWE. Residues 328–359 lie on the Extracellular side of the membrane; the sequence is TEFHMPKMWYLRPGEPIDFTNPINPIYAGVVH. Residues 360 to 377 form a helical membrane-spanning segment; that stretch reads LITALLLYGYLIPISLYV. Residues 378–934 are Cytoplasmic-facing; it reads SIEVVKVWQA…HGHWCYKRIA (557 aa). Asp425 functions as the 4-aspartylphosphate intermediate in the catalytic mechanism. A Glycyl lysine isopeptide (Lys-Gly) (interchain with G-Cter in ubiquitin) cross-link involves residue Lys616. Mg(2+) is bound by residues Asp879 and Asp883. The helical transmembrane segment at 935 to 954 threads the bilayer; it reads QMICYFFYKNIAFGLTLFYF. Residues 955 to 968 are Extracellular-facing; it reads EAFTGFSGQSVYND. A helical membrane pass occupies residues 969–988; the sequence is YYLLLFNVVLTSLPVIALGV. The Cytoplasmic portion of the chain corresponds to 989-1018; the sequence is FEQDVSSEICLQFPALYQQGTKNLFFDWSR. Residues 1019–1041 form a helical membrane-spanning segment; sequence ILGWMCNGVYASLVIFFLNIGII. Residues 1042 to 1054 are Extracellular-facing; that stretch reads YSQAFRDNGQTAD. A helical membrane pass occupies residues 1055–1077; it reads MDAVGTTMFTCIIWAANVQIALT. Over 1078 to 1083 the chain is Cytoplasmic; it reads MSHFTW. Residues 1084–1104 form a helical membrane-spanning segment; it reads IQHVLIWGSIGMWYLFVAIYS. At 1105–1117 the chain is on the extracellular side; the sequence is MMPPSYSGNIYRI. A helical membrane pass occupies residues 1118–1146; the sequence is LDEILAPAPIYWMATLLVTVAAVLPYVAH. Over 1147-1228 the chain is Cytoplasmic; the sequence is IAFQRFLNPL…AQDAMSPRSL (82 aa).

It belongs to the cation transport ATPase (P-type) (TC 3.A.3) family. Type IV subfamily.

The protein resides in the membrane. It catalyses the reaction ATP + H2O + phospholipidSide 1 = ADP + phosphate + phospholipidSide 2.. Functionally, involved in transport of phospholipids. The polypeptide is Probable phospholipid-transporting ATPase 5 (Arabidopsis thaliana (Mouse-ear cress)).